A 115-amino-acid chain; its full sequence is MTRVRRGYIARRRRRKIRLFASSFRGAHSRLTRTATQQKIRALVSSHRGRGRQKRDFRRLWITRINAVTRENGVPYSRLIHDLRKKQLLLNRKILAQIAISNRNCLYMISNDIIK.

Belongs to the bacterial ribosomal protein bL20 family.

The protein resides in the plastid. Its subcellular location is the chloroplast. In terms of biological role, binds directly to 23S ribosomal RNA and is necessary for the in vitro assembly process of the 50S ribosomal subunit. It is not involved in the protein synthesizing functions of that subunit. In Nymphaea alba (White water-lily), this protein is Large ribosomal subunit protein bL20c.